A 91-amino-acid polypeptide reads, in one-letter code: Large ribosomal subunit protein bL27 (91 aa).

The span at 1–13 shows a compositional bias: polar residues; sequence MATKKSGGSSCNG. The disordered stretch occupies residues 1 to 20; sequence MATKKSGGSSCNGRDSRGRR.

This sequence belongs to the bacterial ribosomal protein bL27 family.

This chain is Large ribosomal subunit protein bL27, found in Anaplasma phagocytophilum (strain HZ).